Consider the following 90-residue polypeptide: YcgL domain-containing protein YE2368 (90 aa).

Positions 1–85 (MLCAIYRSPK…PPESLLKMHL (85 aa)) constitute a YcgL domain.

The sequence is that of YcgL domain-containing protein YE2368 from Yersinia enterocolitica serotype O:8 / biotype 1B (strain NCTC 13174 / 8081).